Consider the following 234-residue polypeptide: Phosphoribosylaminoimidazole-succinocarboxamide synthase (234 aa).

Belongs to the SAICAR synthetase family.

The enzyme catalyses 5-amino-1-(5-phospho-D-ribosyl)imidazole-4-carboxylate + L-aspartate + ATP = (2S)-2-[5-amino-1-(5-phospho-beta-D-ribosyl)imidazole-4-carboxamido]succinate + ADP + phosphate + 2 H(+). It participates in purine metabolism; IMP biosynthesis via de novo pathway; 5-amino-1-(5-phospho-D-ribosyl)imidazole-4-carboxamide from 5-amino-1-(5-phospho-D-ribosyl)imidazole-4-carboxylate: step 1/2. The protein is Phosphoribosylaminoimidazole-succinocarboxamide synthase of Streptococcus pyogenes serotype M3 (strain ATCC BAA-595 / MGAS315).